Here is an 807-residue protein sequence, read N- to C-terminus: Glycerol-3-phosphate acyltransferase (807 aa).

Residues 308-313 carry the HXXXXD motif motif; sequence CHRSHM.

It belongs to the GPAT/DAPAT family.

Its subcellular location is the cell inner membrane. The enzyme catalyses sn-glycerol 3-phosphate + an acyl-CoA = a 1-acyl-sn-glycero-3-phosphate + CoA. Its pathway is phospholipid metabolism; CDP-diacylglycerol biosynthesis; CDP-diacylglycerol from sn-glycerol 3-phosphate: step 1/3. This chain is Glycerol-3-phosphate acyltransferase, found in Shewanella sp. (strain ANA-3).